Here is a 239-residue protein sequence, read N- to C-terminus: Octanoyltransferase (239 aa).

One can recognise a BPL/LPL catalytic domain in the interval 48–236 (EGGDELVWLV…AFETVFGETV (189 aa)). Substrate contacts are provided by residues 87-94 (RGGEYTYH), 167-169 (ALG), and 180-182 (GLS). The active-site Acyl-thioester intermediate is the Cys-198.

Belongs to the LipB family.

The protein localises to the cytoplasm. The catalysed reaction is octanoyl-[ACP] + L-lysyl-[protein] = N(6)-octanoyl-L-lysyl-[protein] + holo-[ACP] + H(+). Its pathway is protein modification; protein lipoylation via endogenous pathway; protein N(6)-(lipoyl)lysine from octanoyl-[acyl-carrier-protein]: step 1/2. Its function is as follows. Catalyzes the transfer of endogenously produced octanoic acid from octanoyl-acyl-carrier-protein onto the lipoyl domains of lipoate-dependent enzymes. Lipoyl-ACP can also act as a substrate although octanoyl-ACP is likely to be the physiological substrate. The sequence is that of Octanoyltransferase from Rhizobium etli (strain CIAT 652).